The following is a 219-amino-acid chain: tRNA (guanine-N(7)-)-methyltransferase (219 aa).

S-adenosyl-L-methionine contacts are provided by Glu43, Asp68, Glu101, and Asn124. Residues Lys128 and Asp160 each contribute to the substrate site.

The protein belongs to the class I-like SAM-binding methyltransferase superfamily. TrmB family.

It carries out the reaction guanosine(46) in tRNA + S-adenosyl-L-methionine = N(7)-methylguanosine(46) in tRNA + S-adenosyl-L-homocysteine. It functions in the pathway tRNA modification; N(7)-methylguanine-tRNA biosynthesis. In terms of biological role, catalyzes the formation of N(7)-methylguanine at position 46 (m7G46) in tRNA. The chain is tRNA (guanine-N(7)-)-methyltransferase from Clostridium botulinum (strain Alaska E43 / Type E3).